The following is a 106-amino-acid chain: UPF0060 membrane protein Bphy_5052 (106 aa).

4 helical membrane passes run 4 to 24, 30 to 50, 58 to 78, and 82 to 102; these read LLLYVVTAVAEIVGCYLPWRW, SVWLLLPGALSLALFAWLLTF, VYAAYGGVYVAVAILWLWCVD, and PSAWDLAGVALTLAGMSIIAF.

This sequence belongs to the UPF0060 family.

The protein resides in the cell inner membrane. In Paraburkholderia phymatum (strain DSM 17167 / CIP 108236 / LMG 21445 / STM815) (Burkholderia phymatum), this protein is UPF0060 membrane protein Bphy_5052.